A 164-amino-acid chain; its full sequence is Large ribosomal subunit protein uL15 (164 aa).

Disordered regions lie at residues 1 to 49 and 143 to 164; these read MTKL…SIAG and EKAG…SAEA. Residues 22–36 show a composition bias toward gly residues; it reads RGPGSGKGKTAGRGV.

It belongs to the universal ribosomal protein uL15 family. Part of the 50S ribosomal subunit.

In terms of biological role, binds to the 23S rRNA. In Phenylobacterium zucineum (strain HLK1), this protein is Large ribosomal subunit protein uL15.